Reading from the N-terminus, the 344-residue chain is Short chain dehydrogenase/reductase mfmJ (344 aa).

NADP(+)-binding residues include Leu-51, Lys-76, Asp-99, Asn-126, Tyr-213, and Lys-217. The Proton donor role is filled by Tyr-213. The Lowers pKa of active site Tyr role is filled by Lys-217.

It belongs to the short-chain dehydrogenases/reductases (SDR) family.

Its function is as follows. Short chain dehydrogenase/reductase; part of the gene cluster that mediates the biosynthesis of the phthalide-terpenoid hybrid 11'-O-desmethylfendlerol. MfmJ seems not to be involved directly in the biosynthesis of 11'-O-desmethylfendlerol and its role has still to be determined. The biosynthesis of 11'-O-desmethylfendlerol begins with the NR-PKS mfmB that forms 3,5-dimethylorsellinic acid (DMOA), which is then transformed into the phthalide 5,7-dihydroxy-4-(hydroxymethyl)-6-methylphthalide by the cytochrome P450 monooxygenase mfmA and the hydrolase mfmC. Subsequently, the methyltransferase mfmE catalyzes 7-O-methylation to yield 5-hydroxy-4-(hydroxymethyl)-7-methoxy-6-methylphthalide, which undergoes C-3 hydroxylation by the cytochrome P450 monooxygenase mfmF. The resultant cyclopolic acid (2,5-dihydroxy-4-(hydroxymethyl)-7-methoxy-6-methylphthalide) is then farnesylated by the DMATS-type prenyltransferase mfmD to afford 5-O-farnesylcyclopolic acid. Finally, the Pyr4-family terpene cyclase mfmH cyclizes the farnesyl moiety of 5-O-farnesylcyclopolic acid into a drimane-like structure, thus completing the biosynthesis of 11'-O-desmethylfendlerol. The chain is Short chain dehydrogenase/reductase mfmJ from Annulohypoxylon moriforme (Filamentous fungus).